Here is a 396-residue protein sequence, read N- to C-terminus: Alanine racemase (396 aa).

Lys46 acts as the Proton acceptor; specific for D-alanine in catalysis. An N6-(pyridoxal phosphate)lysine modification is found at Lys46. Arg145 provides a ligand contact to substrate. Tyr280 functions as the Proton acceptor; specific for L-alanine in the catalytic mechanism. Met328 serves as a coordination point for substrate.

It belongs to the alanine racemase family. Requires pyridoxal 5'-phosphate as cofactor.

The catalysed reaction is L-alanine = D-alanine. It functions in the pathway amino-acid biosynthesis; D-alanine biosynthesis; D-alanine from L-alanine: step 1/1. Functionally, catalyzes the interconversion of L-alanine and D-alanine. May also act on other amino acids. The chain is Alanine racemase (alr) from Brucella canis (strain ATCC 23365 / NCTC 10854 / RM-666).